The chain runs to 258 residues: Snake venom serine proteinase 8 (258 aa).

The N-terminal stretch at 1–18 (MVLIRVLANLLILQLSYA) is a signal peptide. The propeptide occupies 19 to 24 (QKSSEL). The region spanning 25–249 (VIGGDECNIN…YNDWIQSIIA (225 aa)) is the Peptidase S1 domain. Disulfide bonds link C31-C163, C50-C66, C98-C256, C142-C210, C174-C189, and C200-C225. N44 carries an N-linked (GlcNAc...) asparagine glycan. Active-site charge relay system residues include H65 and D110. S204 serves as the catalytic Charge relay system.

The protein belongs to the peptidase S1 family. Snake venom subfamily. As to quaternary structure, monomer. In terms of tissue distribution, expressed by the venom gland.

The protein localises to the secreted. In terms of biological role, snake venom serine protease that may act in the hemostasis system of the prey. The sequence is that of Snake venom serine proteinase 8 from Crotalus adamanteus (Eastern diamondback rattlesnake).